The following is a 371-amino-acid chain: UDP-N-acetylglucosamine--N-acetylmuramyl-(pentapeptide) pyrophosphoryl-undecaprenol N-acetylglucosamine transferase (371 aa).

UDP-N-acetyl-alpha-D-glucosamine is bound by residues 15-17 (TGG), Asn-126, Arg-172, Ser-199, Ile-256, 275-280 (ALTVSE), and Gln-301.

This sequence belongs to the glycosyltransferase 28 family. MurG subfamily.

It is found in the cell inner membrane. It carries out the reaction di-trans,octa-cis-undecaprenyl diphospho-N-acetyl-alpha-D-muramoyl-L-alanyl-D-glutamyl-meso-2,6-diaminopimeloyl-D-alanyl-D-alanine + UDP-N-acetyl-alpha-D-glucosamine = di-trans,octa-cis-undecaprenyl diphospho-[N-acetyl-alpha-D-glucosaminyl-(1-&gt;4)]-N-acetyl-alpha-D-muramoyl-L-alanyl-D-glutamyl-meso-2,6-diaminopimeloyl-D-alanyl-D-alanine + UDP + H(+). It participates in cell wall biogenesis; peptidoglycan biosynthesis. In terms of biological role, cell wall formation. Catalyzes the transfer of a GlcNAc subunit on undecaprenyl-pyrophosphoryl-MurNAc-pentapeptide (lipid intermediate I) to form undecaprenyl-pyrophosphoryl-MurNAc-(pentapeptide)GlcNAc (lipid intermediate II). The polypeptide is UDP-N-acetylglucosamine--N-acetylmuramyl-(pentapeptide) pyrophosphoryl-undecaprenol N-acetylglucosamine transferase (Francisella tularensis subsp. mediasiatica (strain FSC147)).